We begin with the raw amino-acid sequence, 580 residues long: NADH-ubiquinone oxidoreductase chain 5 (580 aa).

The next 16 helical transmembrane spans lie at 12-32, 50-70, 92-112, 113-133, 153-173, 176-196, 218-240, 249-269, 274-294, 300-320, 343-363, 378-400, 427-447, 464-484, 500-520, and 560-580; these read FYILIFISFTLFILSLKFLLM, IVMTFLFDWMSLMFMSFVLLI, ILLVLMFVMSMMMLIISPNLI, SILLGWDGLGLVSYCLVIYFQ, VALLLAIAWMLNYGSWNYIFY, MMKNNFEMMVIGGLVMLAAMT, SALVHSSTLVTAGVYLLIRFNIL, FLLLVSGLTMFMAGLGANFEF, IIALSTLSQLGLMMSILSIGY, FHLLTHALFKALLFMCAGVII, CSCFNIANLALCGMPFLAGFY, NFFSFFLFFFSTGLTVCYSFRLV, IFFLMVMAIIGGSMLSWLMFF, MVCLLGGFTGYLISNVNFFFI, MWFMPLISTVGVVKWPLILGM, and IYLLSYMLWVIILVSMMLFLN.

The protein belongs to the complex I subunit 5 family.

Its subcellular location is the mitochondrion inner membrane. It carries out the reaction a ubiquinone + NADH + 5 H(+)(in) = a ubiquinol + NAD(+) + 4 H(+)(out). In terms of biological role, core subunit of the mitochondrial membrane respiratory chain NADH dehydrogenase (Complex I) that is believed to belong to the minimal assembly required for catalysis. Complex I functions in the transfer of electrons from NADH to the respiratory chain. The immediate electron acceptor for the enzyme is believed to be ubiquinone. In Aedes aegypti (Yellowfever mosquito), this protein is NADH-ubiquinone oxidoreductase chain 5.